A 210-amino-acid polypeptide reads, in one-letter code: Probable GTP-binding protein EngB (210 aa).

The EngB-type G domain occupies 25–199 (TGIEVAFAGR…RQKLDTWFSE (175 aa)). GTP is bound by residues 33–40 (GRSNAGKS), 60–64 (GRTQL), 78–81 (DLPG), 145–148 (TKTD), and 178–180 (FSS). Ser40 and Thr62 together coordinate Mg(2+).

Belongs to the TRAFAC class TrmE-Era-EngA-EngB-Septin-like GTPase superfamily. EngB GTPase family. The cofactor is Mg(2+).

In terms of biological role, necessary for normal cell division and for the maintenance of normal septation. This is Probable GTP-binding protein EngB from Escherichia coli O6:K15:H31 (strain 536 / UPEC).